The primary structure comprises 158 residues: Transcription elongation factor GreA (158 aa).

The protein belongs to the GreA/GreB family.

Necessary for efficient RNA polymerase transcription elongation past template-encoded arresting sites. The arresting sites in DNA have the property of trapping a certain fraction of elongating RNA polymerases that pass through, resulting in locked ternary complexes. Cleavage of the nascent transcript by cleavage factors such as GreA or GreB allows the resumption of elongation from the new 3'terminus. GreA releases sequences of 2 to 3 nucleotides. This chain is Transcription elongation factor GreA, found in Psychrobacter cryohalolentis (strain ATCC BAA-1226 / DSM 17306 / VKM B-2378 / K5).